The sequence spans 396 residues: DNA polymerase interacting tetratricopeptide repeat-containing, protein of 47 kDa (396 aa).

3 TPR repeats span residues 91-124 (ALNY…KTDN), 129-162 (AVLY…KPDY), and 163-196 (TKAR…DVDN).

Belongs to the TTC4 family. In terms of assembly, forms a complex with Hsp83 and Hsp70aa. Interacts with DNApol-alpha180; the interaction inhibits the activity of the DNA polymerase and occurs only in proliferating cells but not in quiescent cells. As to expression, more abundant in young embryos, pupae and females and a lower level expression seen in late embryos, larvae and males.

The protein localises to the nucleus. It localises to the nucleoplasm. The protein resides in the cytoplasm. May act as a co-chaperone for HSP83. The protein is DNA polymerase interacting tetratricopeptide repeat-containing, protein of 47 kDa (Dpit47) of Drosophila melanogaster (Fruit fly).